A 427-amino-acid chain; its full sequence is 3-deoxy-D-manno-octulosonic acid transferase (427 aa).

A helical; Signal-anchor membrane pass occupies residues 4-24 (FFYTSLLLICQPLILCFIGLL). The active-site Proton acceptor is the glutamate 62. CMP contacts are provided by residues 270–271 (PR), 311–313 (MGE), and 337–340 (NPLE).

The protein belongs to the glycosyltransferase group 1 family. Glycosyltransferase 30 subfamily.

Its subcellular location is the cell inner membrane. It catalyses the reaction lipid IVA (E. coli) + CMP-3-deoxy-beta-D-manno-octulosonate = alpha-Kdo-(2-&gt;6)-lipid IVA (E. coli) + CMP + H(+). It functions in the pathway bacterial outer membrane biogenesis; LPS core biosynthesis. Involved in lipopolysaccharide (LPS) biosynthesis. Catalyzes the transfer of a single 3-deoxy-D-manno-octulosonate (Kdo) residue from CMP-Kdo to lipid IV(A), the tetraacyldisaccharide-1,4'-bisphosphate precursor of lipid A. Is strictly monofunctional, i.e. is capable of adding only a single Kdo residue to the acceptor lipid. The chain is 3-deoxy-D-manno-octulosonic acid transferase (waaA) from Haemophilus influenzae (strain ATCC 51907 / DSM 11121 / KW20 / Rd).